We begin with the raw amino-acid sequence, 168 residues long: Probable prefoldin subunit 5 (168 aa).

It belongs to the prefoldin subunit alpha family. In terms of assembly, heterohexamer of two PFD-alpha type and four PFD-beta type subunits.

Its function is as follows. Binds specifically to cytosolic chaperonin (c-CPN) and transfers target proteins to it. Binds to nascent polypeptide chain and promotes folding in an environment in which there are many competing pathways for nonnative proteins. The sequence is that of Probable prefoldin subunit 5 from Drosophila melanogaster (Fruit fly).